The chain runs to 277 residues: Diaminopimelate epimerase (277 aa).

Residues N13, Q46, and N66 each contribute to the substrate site. Residue C75 is the Proton donor of the active site. Residues 76-77 (GN), N160, N193, and 211-212 (ER) each bind substrate. C220 (proton acceptor) is an active-site residue. 221–222 (GS) provides a ligand contact to substrate.

It belongs to the diaminopimelate epimerase family. Homodimer.

The protein localises to the cytoplasm. It carries out the reaction (2S,6S)-2,6-diaminopimelate = meso-2,6-diaminopimelate. The protein operates within amino-acid biosynthesis; L-lysine biosynthesis via DAP pathway; DL-2,6-diaminopimelate from LL-2,6-diaminopimelate: step 1/1. In terms of biological role, catalyzes the stereoinversion of LL-2,6-diaminopimelate (L,L-DAP) to meso-diaminopimelate (meso-DAP), a precursor of L-lysine and an essential component of the bacterial peptidoglycan. The sequence is that of Diaminopimelate epimerase from Legionella pneumophila subsp. pneumophila (strain Philadelphia 1 / ATCC 33152 / DSM 7513).